The primary structure comprises 80 residues: MDQRKSGGIPLHAVAKNVRCTSKDIKDYEIYKLLVSYGADINARVEFTGVGFSIYDGKTISEIVEFKIAFVGESEVITEE.

The ANK repeat unit spans residues 6–46; sequence SGGIPLHAVAKNVRCTSKDIKDYEIYKLLVSYGADINARVE.

This Rickettsia conorii (strain ATCC VR-613 / Malish 7) protein is Putative ankyrin repeat protein RC0877.